The chain runs to 247 residues: Ribose-5-phosphate isomerase (247 aa).

Belongs to the ribose 5-phosphate isomerase family.

Its subcellular location is the cytoplasm. It catalyses the reaction aldehydo-D-ribose 5-phosphate = D-ribulose 5-phosphate. It functions in the pathway carbohydrate degradation; pentose phosphate pathway; D-ribose 5-phosphate from D-ribulose 5-phosphate (non-oxidative stage): step 1/1. In Meyerozyma guilliermondii (strain ATCC 6260 / CBS 566 / DSM 6381 / JCM 1539 / NBRC 10279 / NRRL Y-324) (Yeast), this protein is Ribose-5-phosphate isomerase (RKI1).